We begin with the raw amino-acid sequence, 375 residues long: Dual specificity protein phosphatase 4 (375 aa).

Positions 25–143 (SGGRCLLLDC…FASEYPEFCA (119 aa)) constitute a Rhodanese domain. Residues 176–317 (GPVEILPFLY…LLQFESQVLA (142 aa)) form the Tyrosine-protein phosphatase domain. The active-site Phosphocysteine intermediate is the Cys-261.

Belongs to the protein-tyrosine phosphatase family. Non-receptor class dual specificity subfamily.

Its subcellular location is the nucleus. It carries out the reaction O-phospho-L-tyrosyl-[protein] + H2O = L-tyrosyl-[protein] + phosphate. It catalyses the reaction O-phospho-L-seryl-[protein] + H2O = L-seryl-[protein] + phosphate. The catalysed reaction is O-phospho-L-threonyl-[protein] + H2O = L-threonyl-[protein] + phosphate. Its function is as follows. Regulates mitogenic signal transduction by dephosphorylating both Thr and Tyr residues on MAP kinases ERK1 and ERK2. This is Dual specificity protein phosphatase 4 (DUSP4) from Gallus gallus (Chicken).